A 640-amino-acid polypeptide reads, in one-letter code: Leucine-rich repeat-containing protein 4C (640 aa).

The signal sequence occupies residues 1–44 (MLNKMTLHPQQIMIGPRFNRALFDPLLVVLLALQLLVVAGLVRA). One can recognise an LRRNT domain in the interval 45–76 (QTCPSVCSCSNQFSKVICVRKNLREVPDGIST). 9 LRR repeats span residues 77–98 (NTRLLNLHENQIQIIKVNSFKH), 101–122 (HLEILQLSRNHIRTIEIGAFNG), 125–146 (NLNTLELFDNRLTTIPNGAFVY), 149–170 (KLKELWLRNNPIESIPSYAFNR), 173–195 (SLRRLDLGELKRLSYISEGAFEG), 198–219 (NLRYLNLAMCNLREIPNLTPLI), 220–241 (KLDELDLSGNHLSAIRPGSFQG), 244–265 (HLQKLWMIQSQIQVIERNAFDN), and 268–289 (SLVEINLAHNNLTLLPHDLFTP). The region spanning 301–353 (NPWNCNCDILWLSWWIKDMAPSNTACCARCNTPPNLKGRYIGELDQNYFTCYA) is the LRRCT domain. The Ig-like C2-type domain occupies 354 to 442 (PVIVEPPADL…GNTTASATLN (89 aa)). Residues C375 and C426 are joined by a disulfide bond. The tract at residues 463 to 483 (EPSQDEARTTDNNVGPTPVVD) is disordered. The chain crosses the membrane as a helical span at residues 528–548 (IIIGCFVAITLMAAVMLVIFY). S631 carries the post-translational modification Phosphoserine.

In terms of assembly, interacts with NTNG1 and WHRN. As to expression, highly expressed in the cerebral cortex, including frontal, parietal and occipital lobes. Putamen, amygdala, hippocampus and medulla oblongata show moderate expression. Caudate nucleus and thalamus express small amounts, whereas other brain regions show very weak or no expression.

Its subcellular location is the postsynaptic cell membrane. In terms of biological role, may promote neurite outgrowth of developing thalamic neurons. The chain is Leucine-rich repeat-containing protein 4C (LRRC4C) from Homo sapiens (Human).